Reading from the N-terminus, the 240-residue chain is Manganese transport system ATP-binding protein MntB (240 aa).

Positions 1 to 233 (MEIQGLTIAY…KIQFAYGDAP (233 aa)) constitute an ABC transporter domain. 33–40 (GPNGAGKS) contacts ATP.

This sequence belongs to the ABC transporter superfamily.

It is found in the cell membrane. In terms of biological role, this protein is probably a component of a manganese permease, a binding protein-dependent, ATP-driven transport system. Probably responsible for energy coupling to the transport system. The sequence is that of Manganese transport system ATP-binding protein MntB (mntB) from Listeria monocytogenes serovar 1/2a (strain ATCC BAA-679 / EGD-e).